The primary structure comprises 267 residues: RWD domain-containing protein 3 (267 aa).

The region spanning 7–114 is the RWD domain; the sequence is QELSALAAIF…LWTQQNLRHI (108 aa). Interaction with UBE2I/UBC9 stretches follow at residues 13-15 and 100-102; these read AAI and VHE.

In terms of assembly, interacts with UBE2I/UBC9, NFKBIA, HIF1A and NCOA2.

It localises to the nucleus. It is found in the cytoplasm. In terms of biological role, enhancer of SUMO conjugation. Via its interaction with UBE2I/UBC9, increases SUMO conjugation to proteins by promoting the binding of E1 and E2 enzymes, thioester linkage between SUMO and UBE2I/UBC9 and transfer of SUMO to specific target proteins which include HIF1A, PIAS, NFKBIA, NR3C1 and TOP1. Positively regulates the NF-kappa-B signaling pathway by enhancing the sumoylation of NF-kappa-B inhibitor alpha (NFKBIA), promoting its stabilization which consequently leads to an increased inhibition of NF-kappa-B transcriptional activity. Negatively regulates the hypoxia-inducible factor-1 alpha (HIF1A) signaling pathway by increasing the sumoylation of HIF1A, promoting its stabilization, transcriptional activity and the expression of its target gene VEGFA during hypoxia. Has no effect on ubiquitination. The chain is RWD domain-containing protein 3 (Rwdd3) from Rattus norvegicus (Rat).